The chain runs to 344 residues: Phenylalanine--tRNA ligase alpha subunit (344 aa).

E255 contacts Mg(2+).

This sequence belongs to the class-II aminoacyl-tRNA synthetase family. Phe-tRNA synthetase alpha subunit type 1 subfamily. As to quaternary structure, tetramer of two alpha and two beta subunits. The cofactor is Mg(2+).

The protein localises to the cytoplasm. The enzyme catalyses tRNA(Phe) + L-phenylalanine + ATP = L-phenylalanyl-tRNA(Phe) + AMP + diphosphate + H(+). The chain is Phenylalanine--tRNA ligase alpha subunit from Phocaeicola vulgatus (strain ATCC 8482 / DSM 1447 / JCM 5826 / CCUG 4940 / NBRC 14291 / NCTC 11154) (Bacteroides vulgatus).